We begin with the raw amino-acid sequence, 120 residues long: Large ribosomal subunit protein bL12 (120 aa).

This sequence belongs to the bacterial ribosomal protein bL12 family. In terms of assembly, homodimer. Part of the ribosomal stalk of the 50S ribosomal subunit. Forms a multimeric L10(L12)X complex, where L10 forms an elongated spine to which 2 to 4 L12 dimers bind in a sequential fashion. Binds GTP-bound translation factors.

Functionally, forms part of the ribosomal stalk which helps the ribosome interact with GTP-bound translation factors. Is thus essential for accurate translation. In Listeria welshimeri serovar 6b (strain ATCC 35897 / DSM 20650 / CCUG 15529 / CIP 8149 / NCTC 11857 / SLCC 5334 / V8), this protein is Large ribosomal subunit protein bL12.